The primary structure comprises 244 residues: Small ribosomal subunit protein uS3 (244 aa).

In terms of domain architecture, KH type-2 spans 38 to 106; sequence IRKYLNARLA…EVQINIFEVK (69 aa). The segment covering 222–235 has biased composition (basic and acidic residues); the sequence is TGRRNDNAGGNRDK. The disordered stretch occupies residues 222–244; it reads TGRRNDNAGGNRDKNFKRKRANR.

This sequence belongs to the universal ribosomal protein uS3 family. Part of the 30S ribosomal subunit. Forms a tight complex with proteins S10 and S14.

Functionally, binds the lower part of the 30S subunit head. Binds mRNA in the 70S ribosome, positioning it for translation. In Parabacteroides distasonis (strain ATCC 8503 / DSM 20701 / CIP 104284 / JCM 5825 / NCTC 11152), this protein is Small ribosomal subunit protein uS3.